A 594-amino-acid polypeptide reads, in one-letter code: Putative aldehyde oxidase Art an 7 (594 aa).

The first 23 residues, methionine 1–alanine 23, serve as a signal peptide directing secretion. A disordered region spans residues threonine 28–aspartate 56.

Post-translationally, the N-terminus is blocked. Glycosylated. Expressed in pollen (at protein level).

It is found in the cytoplasm. The enzyme catalyses an aldehyde + O2 + H2O = a carboxylate + H2O2 + H(+). Catalyzes the oxidation of aldehydes to the corresponding carboxylate by coupling the reaction to the reduction of dioxygen to hydrogen peroxide. Substrates include glyoxal and other aldehydes. Does not have enzymatic activity on D-galactose. This is Putative aldehyde oxidase Art an 7 from Artemisia annua (Sweet wormwood).